Here is a 39-residue protein sequence, read N- to C-terminus: Antimicrobial peptide CHP1 (39 aa).

3 disulfide bridges follow: C6–C28, C13–C34, and C18–C35.

Functionally, bactericidal activity; inhibits S.aureus and E.coli. This Gallus gallus (Chicken) protein is Antimicrobial peptide CHP1.